The sequence spans 372 residues: Alpha-parvin (372 aa).

Residues 1–11 (MATSPQKSPSV) are compositionally biased toward low complexity. The interval 1 to 45 (MATSPQKSPSVPKSPTPKSPPSRKKDDSFLGKLGGTLARRKKAKE) is disordered. N-acetylalanine is present on A2. Phosphoserine is present on residues S8, S14, and S19. The tract at residues 21–25 (PSRKK) is interaction with ARHGAP31. S28 and S62 each carry phosphoserine. 2 consecutive Calponin-homology (CH) domains span residues 95 to 202 (QELM…QYFR) and 262 to 369 (NVVK…TKYR). The interval 223–372 (GILQSRQIQE…NLFTKYRNVE (150 aa)) is required for interaction with TESK1 and ILK.

Belongs to the parvin family. Component of the heterotrimeric IPP (ILK-PINCH-PARVIN) complex composed of ILK, LIMS1/PINCH and PARVA; the complex binds to F-actin via the C-terminal tail of LIMS1 and the N-terminal region of PARVA, promoting F-actin filament bundling. Formation of the IPP complex is dependent on protein kinase C and precedes integrin-mediated cell adhesion and spreading. Interacts with TGFB1I1. Interacts with ARHGAP31. Interacts with the actin cytoskeleton. Interacts (via C-terminus) with TESK1 (via C-terminus); the interaction inhibits TESK1 kinase activity. Interacts with PXN/PAXILLIN (via LD motif 4). In terms of tissue distribution, widely expressed, with highest levels in heart, skeletal muscle, kidney and liver.

The protein resides in the cell junction. It localises to the focal adhesion. The protein localises to the cell membrane. It is found in the cytoplasm. Its subcellular location is the cytoskeleton. The protein resides in the myofibril. It localises to the sarcomere. The protein localises to the z line. Plays a role in sarcomere organization and in smooth muscle cell contraction. Required for normal development of the embryonic cardiovascular system, and for normal septation of the heart outflow tract. Plays a role in sprouting angiogenesis and is required for normal adhesion of vascular smooth muscle cells to endothelial cells during blood vessel development. Plays a role in the reorganization of the actin cytoskeleton, formation of lamellipodia and ciliogenesis. Plays a role in the establishment of cell polarity, cell adhesion, cell spreading, and directed cell migration. Within the IPP (ILK-PINCH-PARVIN) complex, binds to F-actin, promoting F-actin bundling, a process required to generate force for actin cytoskeleton reorganization and subsequent dynamic cell adhesion events such as cell spreading and migration. This is Alpha-parvin (PARVA) from Homo sapiens (Human).